The sequence spans 409 residues: MGKLHSKHACKRRENPEGDSFVVNGFIAKRAAEEDERYGNNLKDYKNEELKDGRLTLLHCPLQVVLPPEKAEGCESFLQYLSPDDGERDAQKVKKRISLQDLECNVSLAEDNRQEWVFTLYDFDNSGKVTKEDMSSLMHTIYDVVDASVKHSCNTKRRSLRVKLSVTPEPAARRRDATHTERETSHLSQVEPVRSEEHRSADRRQSTHIRGQTEAHEGNHYCVDENTERRNHYLDLAGIENYTSRFDSSSPDADQDPPSRSSHSQSRPHSQEPETHVYQRRSQLIEPCVAPDPRLRTGPQLIRSRSPKGSSRFPGVIPNVTKTSKCHGHHQPIPTGQDVYHLTQQNHTHAHTPSGLQHSHSRRIRSRAREQQALTPVKNTNATALVQRHEHHHHHEHHHHHHYHHYHQT.

A lipid anchor (N-myristoyl glycine) is attached at G2. The EF-hand domain maps to 109-144 (AEDNRQEWVFTLYDFDNSGKVTKEDMSSLMHTIYDV). Ca(2+)-binding residues include D122, D124, S126, K128, and D133. Disordered regions lie at residues 166 to 224 (VTPE…YCVD), 243 to 315 (TSRF…RFPG), 346 to 367 (NHTHAHTPSGLQHSHSRRIRSR), and 388 to 409 (RHEHHHHHEHHHHHHYHHYHQT). Basic and acidic residues-rich tracts occupy residues 171-185 (AARRRDATHTERETS) and 193-224 (VRSEEHRSADRRQSTHIRGQTEAHEGNHYCVD). Over residues 247 to 268 (DSSSPDADQDPPSRSSHSQSRP) the composition is skewed to low complexity. Positions 389–409 (HEHHHHHEHHHHHHYHHYHQT) are enriched in basic residues.

The protein belongs to the NKD family.

The protein localises to the cell membrane. It localises to the cytoplasm. Functionally, cell autonomous antagonist of both the canonical and non-canonical Wnt signaling pathways. The polypeptide is Protein naked cuticle homolog 2-like (nkd2l) (Danio rerio (Zebrafish)).